The sequence spans 429 residues: Putative GMP synthase [glutamine-hydrolyzing] (429 aa).

Residues 10 to 118 (TIFILDFGSQ…GYTPIHLYPC (109 aa)) form the Glutamine amidotransferase type-1 domain. The active-site Nucleophile is Cys-87. The GMPS ATP-PPase domain occupies 119 to 304 (ELFKHIVDCE…LGLSSYLLDR (186 aa)). Catalysis depends on residues His-176 and Glu-178.

Homodimer.

It catalyses the reaction XMP + L-glutamine + ATP + H2O = GMP + L-glutamate + AMP + diphosphate + 2 H(+). It functions in the pathway purine metabolism; GMP biosynthesis; GMP from XMP (L-Gln route): step 1/1. In terms of biological role, catalyzes the synthesis of GMP from XMP. In Chlamydia pneumoniae (Chlamydophila pneumoniae), this protein is Putative GMP synthase [glutamine-hydrolyzing] (guaA).